Here is a 359-residue protein sequence, read N- to C-terminus: Cyclin-Y-like protein 1 (359 aa).

Phosphoserine occurs at positions 67, 105, and 112. A Cyclin N-terminal domain is found at 145–267; the sequence is VTLAIYYHIK…CQILKDITVE (123 aa). A Phosphoserine modification is found at Ser344.

The protein belongs to the cyclin family. Cyclin Y subfamily. As to quaternary structure, interacts with CDK16; this interaction mutually increases the stability of CDK16 and CCNYL1 and increases the kinase activity of CDK16.

Its subcellular location is the cell membrane. In terms of biological role, key regulator of Wnt signaling implicated in various biological processes including male fertility, embryonic neurogenesis and cortex development. Activates the cyclin-dependent kinase CDK16, and promotes sperm maturation. This is Cyclin-Y-like protein 1 from Homo sapiens (Human).